The primary structure comprises 202 residues: MFTGIITDIGKVDRVKPLNEGVLLRIETAYDPETIELGASIACSGVCLTVVALPEKGSNARWFEVEAWEEALRLTTISSWQSGRKINLERSLKLGDEMGGHLVFGHVDGQAEIVERKDEGDAVRFTLRAPEELAPFIAQKGSVALDGTSLTVNGVNANEFDVLLIRHSLEVTTWGERKAGDKVNIEIDQLARYAARLAQYQK.

Lumazine-binding repeat units lie at residues 1 to 101 (MFTG…MGGH) and 102 to 198 (LVFG…ARLA). Residues 4–6 (GII), 47–49 (CLT), 66–68 (EAW), 105–107 (GHV), Lys140, 149–151 (SLT), and 163–168 (LLIRHS) contribute to the 2,4-dihydroxypteridine site.

In terms of assembly, homotrimer.

The catalysed reaction is 2 6,7-dimethyl-8-(1-D-ribityl)lumazine + H(+) = 5-amino-6-(D-ribitylamino)uracil + riboflavin. Its pathway is cofactor biosynthesis; riboflavin biosynthesis; riboflavin from 2-hydroxy-3-oxobutyl phosphate and 5-amino-6-(D-ribitylamino)uracil: step 2/2. Its activity is regulated as follows. Is inhibited by riboflavin. Product inhibition may be the major mechanism by which RS regulates its enzymatic activity in vivo. Catalyzes the dismutation of two molecules of 6,7-dimethyl-8-ribityllumazine, resulting in the formation of riboflavin and 5-amino-6-(D-ribitylamino)uracil. This Brucella abortus (strain 2308) protein is Riboflavin synthase.